A 192-amino-acid polypeptide reads, in one-letter code: Thymidine kinase (192 aa).

Residues 9 to 16 (STMNAGKS) and 87 to 90 (DEAQ) contribute to the ATP site. Catalysis depends on glutamate 88, which acts as the Proton acceptor. Residues cysteine 145, cysteine 147, cysteine 182, and histidine 185 each coordinate Zn(2+).

This sequence belongs to the thymidine kinase family. Homotetramer.

Its subcellular location is the cytoplasm. The enzyme catalyses thymidine + ATP = dTMP + ADP + H(+). The chain is Thymidine kinase from Pasteurella multocida (strain Pm70).